The chain runs to 86 residues: Long neurotoxin homolog (86 aa).

The N-terminal stretch at 1–21 is a signal peptide; that stretch reads MKTLLLTLVVVTIVCLALGYT. Intrachain disulfides connect Cys24–Cys45, Cys27–Cys32, Cys38–Cys63, Cys67–Cys78, and Cys79–Cys84.

This sequence belongs to the three-finger toxin family. Ancestral subfamily. Orphan group II sub-subfamily. In terms of tissue distribution, expressed by the venom gland.

The protein localises to the secreted. Binds with low affinity and weakly inhibits muscle nicotinic acetylcholine receptor (nAChR). This is Long neurotoxin homolog from Naja atra (Chinese cobra).